Reading from the N-terminus, the 475-residue chain is MTWEVVIGLEIHAQLTTKTKIFSGSSIDYGAAPNTQANLLDLGMPGQLPVLNKAVIPKAIKLGLALGAKIGRRSVFDRKNYFYPDLPKGYQTSQFSFPIVDTGGVVEIEVDGEIKKIGVTRAHLEEDAGKSIHDAFPGQTGIDLNRAGTPLLEIVSEPDMRSAKEAVAYAKKMHELVQYLGICDGNMQEGSFRVDSNVSIHKPGTPFGTRAELKNINSFKFIEQAIELEIERQIEVLESGGKVVQETRLYDADKNETRSMREKEEANDYRYFPCPDLLPVVITEEDIEAIRAEMPEMPDAKRKRYVADFGLSDYDAAFLTGSRAMAEYFEAVVAKTNEAKVSANWVMGELSKSLNQKGIDISESPVSADMLAGLIERIQDNTISGKIAKQVFDGMWSGEGSADEIIEQKGLKQITDSSAIEALVNDVLANNAAQVEAYKGGQEKMFGFFVGQVMKASQGQANPAQVNQVLKDKLK.

Belongs to the GatB/GatE family. GatB subfamily. In terms of assembly, heterotrimer of A, B and C subunits.

It catalyses the reaction L-glutamyl-tRNA(Gln) + L-glutamine + ATP + H2O = L-glutaminyl-tRNA(Gln) + L-glutamate + ADP + phosphate + H(+). It carries out the reaction L-aspartyl-tRNA(Asn) + L-glutamine + ATP + H2O = L-asparaginyl-tRNA(Asn) + L-glutamate + ADP + phosphate + 2 H(+). Functionally, allows the formation of correctly charged Asn-tRNA(Asn) or Gln-tRNA(Gln) through the transamidation of misacylated Asp-tRNA(Asn) or Glu-tRNA(Gln) in organisms which lack either or both of asparaginyl-tRNA or glutaminyl-tRNA synthetases. The reaction takes place in the presence of glutamine and ATP through an activated phospho-Asp-tRNA(Asn) or phospho-Glu-tRNA(Gln). This chain is Aspartyl/glutamyl-tRNA(Asn/Gln) amidotransferase subunit B, found in Hydrogenovibrio crunogenus (strain DSM 25203 / XCL-2) (Thiomicrospira crunogena).